Here is a 554-residue protein sequence, read N- to C-terminus: Macrophage colony-stimulating factor 1 (554 aa).

Residues 1 to 32 (MTAPGAAGRCPPTTWLGSLLLLVCLLASRSIT) form the signal peptide. The Lumenal portion of the chain corresponds to 33 to 496 (EEVSEYCSHM…GSFSPQLQES (464 aa)). Intrachain disulfides connect cysteine 39-cysteine 122, cysteine 80-cysteine 171, and cysteine 134-cysteine 178. N-linked (GlcNAc...) asparagine glycans are attached at residues asparagine 154 and asparagine 172. Residues 224–488 (EDSEGTEGSS…TGHERQSEGS (265 aa)) form a disordered region. At threonine 266 the chain carries Phosphothreonine; by FAM20C. The O-linked (Xyl...) (chondroitin sulfate) serine glycan is linked to serine 309. The span at 344–354 (LSASSPLPASA) shows a compositional bias: low complexity. O-linked (GalNAc...) threonine glycosylation is found at threonine 363 and threonine 365. Over residues 404–433 (RISSLRPQGLSNPSTLSAQPQLSRSHSSGS) the composition is skewed to polar residues. The interval 406-426 (SSLRPQGLSNPSTLSAQPQLS) is O-glycosylated at one site. Residues 440–453 (LEGRRSTRDRRSPA) show a composition bias toward basic and acidic residues. The chain crosses the membrane as a helical span at residues 497–517 (VFHLLVPSVILVLLAVGGLLF). Over 518 to 554 (YRWRRRSHQEPQRADSPLEQPEGSPLTQDDRQVELPV) the chain is Cytoplasmic. The segment at 526-554 (QEPQRADSPLEQPEGSPLTQDDRQVELPV) is disordered. The span at 545-554 (QDDRQVELPV) shows a compositional bias: basic and acidic residues.

Homodimer or heterodimer; disulfide-linked. Likely to exist in multiple forms: homodimer consisting of 2 identical 150-200 kDa proteoglycan subunits, heterodimer consisting of a 150-200 kDa proteoglycan subunit and a truncated 43 kDa subunit, and homodimer consisting of 2 identical 43 kDa subunits. Interacts with CSF1R. In terms of processing, N-glycosylated. Post-translationally, O-glycosylated; contains chondroitin sulfate. O-glycosylated with core 1 or possibly core 8 glycans. O-glycosylated.

It localises to the cell membrane. The protein resides in the secreted. It is found in the extracellular space. Cytokine that plays an essential role in the regulation of survival, proliferation and differentiation of hematopoietic precursor cells, especially mononuclear phagocytes, such as macrophages and monocytes. Promotes the release of pro-inflammatory chemokines, and thereby plays an important role in innate immunity and in inflammatory processes. Plays an important role in the regulation of osteoclast proliferation and differentiation, the regulation of bone resorption, and is required for normal bone development. Required for normal male and female fertility. Promotes reorganization of the actin cytoskeleton, regulates formation of membrane ruffles, cell adhesion and cell migration. Plays a role in lipoprotein clearance. The polypeptide is Macrophage colony-stimulating factor 1 (CSF1) (Homo sapiens (Human)).